Here is a 385-residue protein sequence, read N- to C-terminus: Outer membrane porin protein BP0840 (385 aa).

A signal peptide spans 1–20 (MKKTLLAAALLAGFAGAAQA).

It to bacterial outer membrane proteins and porins. Homotrimer.

It is found in the cell outer membrane. Forms anion selective channels. This chain is Outer membrane porin protein BP0840, found in Bordetella pertussis (strain Tohama I / ATCC BAA-589 / NCTC 13251).